The sequence spans 60 residues: MAKGKENRIIITIECTEAKKEGKPVSRYSTTKNKKNTTERLLLKKYNPNLQRHTVHKEIK.

Belongs to the bacterial ribosomal protein bL33 family.

In Chlorobium limicola (strain DSM 245 / NBRC 103803 / 6330), this protein is Large ribosomal subunit protein bL33.